A 163-amino-acid polypeptide reads, in one-letter code: Iron-sulfur cluster assembly protein 2 (163 aa).

A mitochondrion-targeting transit peptide spans 1 to 48 (MMMLRQTSRKAYLGLQASPLGLGRRLYHENVIDHFENPRNVGSFNRND).

The protein belongs to the NifU family. Component of the core Fe-S cluster (ISC) assembly machinery. It depends on [2Fe-2S] cluster as a cofactor. Mostly expressed in leaves, pollen and flowers.

The protein resides in the mitochondrion matrix. Its pathway is cofactor biosynthesis; iron-sulfur cluster biosynthesis. Functionally, scaffold protein for the de novo synthesis of iron-sulfur (Fe-S) clusters within mitochondria, which is required for maturation of both mitochondrial and cytoplasmic [2Fe-2S] and [4Fe-4S] proteins. First, a [2Fe-2S] cluster is transiently assembled on the scaffold protein ISCU (ISU1, ISU2 or ISU3). In a second step, the cluster is released from ISCU, transferred to a glutaredoxin, followed by the formation of mitochondrial [2Fe-2S] proteins, the synthesis of [4Fe-4S] clusters and their target-specific insertion into the recipient apoproteins. Cluster assembly on ISCU depends on the function of the cysteine desulfurase complex NFS1-ISD11, which serves as the sulfur donor for cluster synthesis, the iron-binding protein frataxin as the putative iron donor, and the electron transfer chain comprised of ferredoxin reductase and ferredoxin, which receive their electrons from NADH. The sequence is that of Iron-sulfur cluster assembly protein 2 (ISU2) from Arabidopsis thaliana (Mouse-ear cress).